The following is a 254-amino-acid chain: Dihydroanticapsin 7-dehydrogenase (254 aa).

NAD(+) is bound at residue 9-31; that stretch reads LITGGASGIGYAAVQAFLNQQAN. S139 provides a ligand contact to substrate. The active-site Proton acceptor is the Y152.

It belongs to the short-chain dehydrogenases/reductases (SDR) family.

It catalyses the reaction L-dihydroanticapsin + NAD(+) = L-anticapsin + NADH + H(+). It participates in antibiotic biosynthesis; bacilysin biosynthesis. In terms of biological role, part of the bacABCDEFG operon responsible for the biosynthesis of bacilysin, an irreversible inactivator of the glutaminase domain of glucosamine synthetase. Catalyzes the dehydrogenation of the C7-hydroxyl group in the 4S-tetrahydrotyrosine (4S-H4Tyr) to yield anticapsin (epoxycyclohexanonyl-Ala). In Bacillus amyloliquefaciens (Bacillus velezensis), this protein is Dihydroanticapsin 7-dehydrogenase.